The following is a 317-amino-acid chain: Melanocyte-stimulating hormone receptor (317 aa).

Residues 1 to 37 lie on the Extracellular side of the membrane; sequence MPVQGSQRRLLGSLNSTPTATPKLGLAANQTGAWCLE. A glycan (N-linked (GlcNAc...) asparagine) is linked at Asn-29. Residues 38–63 form a helical membrane-spanning segment; sequence VSIPDGLFLSLGLVSLVENVLVVAAI. The Cytoplasmic segment spans residues 64–72; the sequence is AKNRNLHSP. The helical transmembrane segment at 73-93 threads the bilayer; that stretch reads MYCFICCLALSDLLVSGSNML. The Extracellular segment spans residues 94-118; that stretch reads ETAVILLLEAGALAARAAVVQQLDN. The helical transmembrane segment at 119 to 140 threads the bilayer; that stretch reads VIDVITCSSMLSSLCFLGAIAV. At 141-163 the chain is on the cytoplasmic side; that stretch reads DRYISIFYALRYHSIVTLPRAQR. A helical membrane pass occupies residues 164–183; the sequence is VVAAIWVASVLFSTLFIAYY. The Extracellular portion of the chain corresponds to 184–191; it reads DHAAVLLC. A helical transmembrane segment spans residues 192–211; sequence LVVFFLAMLVLMAVLYVHML. The Cytoplasmic segment spans residues 212-240; that stretch reads ARACQHAQGIAQLHKRQRPAHQGFGLKGA. Residues 241–266 traverse the membrane as a helical segment; that stretch reads ATLTILLGIFFLCWGPFFLHLTLIVL. The Extracellular portion of the chain corresponds to 267–279; sequence CPQHPTCSCIFKN. A helical transmembrane segment spans residues 280-300; sequence FNLFLALIICNAIIDPLIYAF. Over 301–317 the chain is Cytoplasmic; sequence RSQELRRTLKEVLLCSW. Cys-315 is lipidated: S-palmitoyl cysteine.

This sequence belongs to the G-protein coupled receptor 1 family. As to quaternary structure, interacts with MGRN1, but does not undergo MGRN1-mediated ubiquitination; this interaction competes with GNAS-binding and thus inhibits agonist-induced cAMP production. Interacts with OPN3; the interaction results in a decrease in MC1R-mediated cAMP signaling and ultimately a decrease in melanin production in melanocytes.

It is found in the cell membrane. Receptor for MSH (alpha, beta and gamma) and ACTH. The activity of this receptor is mediated by G proteins which activate adenylate cyclase. Mediates melanogenesis, the production of eumelanin (black/brown) and phaeomelanin (red/yellow), via regulation of cAMP signaling in melanocytes. The chain is Melanocyte-stimulating hormone receptor (MC1R) from Colobus guereza (Mantled guereza).